The sequence spans 416 residues: Enolase (416 aa).

Glutamine 160 is a (2R)-2-phosphoglycerate binding site. The active-site Proton donor is glutamate 204. 3 residues coordinate Mg(2+): aspartate 239, glutamate 282, and aspartate 308. Lysine 333, arginine 362, serine 363, and lysine 384 together coordinate (2R)-2-phosphoglycerate. Lysine 333 (proton acceptor) is an active-site residue.

It belongs to the enolase family. The cofactor is Mg(2+).

It is found in the cytoplasm. The protein localises to the secreted. It localises to the cell surface. It carries out the reaction (2R)-2-phosphoglycerate = phosphoenolpyruvate + H2O. It functions in the pathway carbohydrate degradation; glycolysis; pyruvate from D-glyceraldehyde 3-phosphate: step 4/5. Catalyzes the reversible conversion of 2-phosphoglycerate (2-PG) into phosphoenolpyruvate (PEP). It is essential for the degradation of carbohydrates via glycolysis. The polypeptide is Enolase (Metallosphaera sedula (strain ATCC 51363 / DSM 5348 / JCM 9185 / NBRC 15509 / TH2)).